The primary structure comprises 203 residues: FMN-dependent NADH:quinone oxidoreductase (203 aa).

FMN contacts are provided by residues Ser-9, 15–17 (SVS), and 139–142 (TRGG).

Belongs to the azoreductase type 1 family. In terms of assembly, homodimer. It depends on FMN as a cofactor.

The enzyme catalyses 2 a quinone + NADH + H(+) = 2 a 1,4-benzosemiquinone + NAD(+). It carries out the reaction N,N-dimethyl-1,4-phenylenediamine + anthranilate + 2 NAD(+) = 2-(4-dimethylaminophenyl)diazenylbenzoate + 2 NADH + 2 H(+). In terms of biological role, quinone reductase that provides resistance to thiol-specific stress caused by electrophilic quinones. Functionally, also exhibits azoreductase activity. Catalyzes the reductive cleavage of the azo bond in aromatic azo compounds to the corresponding amines. The protein is FMN-dependent NADH:quinone oxidoreductase of Albidiferax ferrireducens (strain ATCC BAA-621 / DSM 15236 / T118) (Rhodoferax ferrireducens).